Consider the following 284-residue polypeptide: 3-methyl-2-oxobutanoate hydroxymethyltransferase 2 (284 aa).

Mg(2+) is bound by residues Asp49 and Asp88. 3-methyl-2-oxobutanoate-binding positions include 49–50 (DS), Asp88, and Lys118. Position 120 (Glu120) interacts with Mg(2+). Glu187 functions as the Proton acceptor in the catalytic mechanism.

The protein belongs to the PanB family. Homodecamer; pentamer of dimers. Requires Mg(2+) as cofactor.

It localises to the cytoplasm. The enzyme catalyses 3-methyl-2-oxobutanoate + (6R)-5,10-methylene-5,6,7,8-tetrahydrofolate + H2O = 2-dehydropantoate + (6S)-5,6,7,8-tetrahydrofolate. The protein operates within cofactor biosynthesis; (R)-pantothenate biosynthesis; (R)-pantoate from 3-methyl-2-oxobutanoate: step 1/2. Its function is as follows. Catalyzes the reversible reaction in which hydroxymethyl group from 5,10-methylenetetrahydrofolate is transferred onto alpha-ketoisovalerate to form ketopantoate. The chain is 3-methyl-2-oxobutanoate hydroxymethyltransferase 2 from Burkholderia ambifaria (strain ATCC BAA-244 / DSM 16087 / CCUG 44356 / LMG 19182 / AMMD) (Burkholderia cepacia (strain AMMD)).